Reading from the N-terminus, the 218-residue chain is UPF0301 protein RPB_4502 (218 aa).

A disordered region spans residues 1–26 (MVTKSKRPKSGDRSGREPGNAGPIEQ).

This sequence belongs to the UPF0301 (AlgH) family.

The protein is UPF0301 protein RPB_4502 of Rhodopseudomonas palustris (strain HaA2).